The sequence spans 1162 residues: DNA-directed RNA polymerase subunit beta (1162 aa).

It belongs to the RNA polymerase beta chain family. The RNAP catalytic core consists of 2 alpha, 1 beta, 1 beta' and 1 omega subunit. When a sigma factor is associated with the core the holoenzyme is formed, which can initiate transcription.

It carries out the reaction RNA(n) + a ribonucleoside 5'-triphosphate = RNA(n+1) + diphosphate. Functionally, DNA-dependent RNA polymerase catalyzes the transcription of DNA into RNA using the four ribonucleoside triphosphates as substrates. The chain is DNA-directed RNA polymerase subunit beta from Clavibacter sepedonicus (Clavibacter michiganensis subsp. sepedonicus).